The sequence spans 326 residues: DNA-directed RNA polymerase subunit alpha (326 aa).

The interval 1-232 is alpha N-terminal domain (alpha-NTD); that stretch reads MQGSARDFLK…EQLSSFVELE (232 aa). Positions 246 to 326 are alpha C-terminal domain (alpha-CTD); it reads FDPQLLAAVD…NWPPVDLMSE (81 aa).

This sequence belongs to the RNA polymerase alpha chain family. As to quaternary structure, homodimer. The RNAP catalytic core consists of 2 alpha, 1 beta, 1 beta' and 1 omega subunit. When a sigma factor is associated with the core the holoenzyme is formed, which can initiate transcription.

The catalysed reaction is RNA(n) + a ribonucleoside 5'-triphosphate = RNA(n+1) + diphosphate. DNA-dependent RNA polymerase catalyzes the transcription of DNA into RNA using the four ribonucleoside triphosphates as substrates. This chain is DNA-directed RNA polymerase subunit alpha, found in Vesicomyosocius okutanii subsp. Calyptogena okutanii (strain HA).